We begin with the raw amino-acid sequence, 214 residues long: Redox-sensing transcriptional repressor Rex (214 aa).

The segment at residues 17–56 (KYHRYLEELLKSDVDRISSKELSEKIGFTASQIRQDLNCF) is a DNA-binding region (H-T-H motif). 91–96 (GAGNIG) serves as a coordination point for NAD(+).

It belongs to the transcriptional regulatory Rex family. As to quaternary structure, homodimer.

Its subcellular location is the cytoplasm. Modulates transcription in response to changes in cellular NADH/NAD(+) redox state. The polypeptide is Redox-sensing transcriptional repressor Rex (Clostridium acetobutylicum (strain ATCC 824 / DSM 792 / JCM 1419 / IAM 19013 / LMG 5710 / NBRC 13948 / NRRL B-527 / VKM B-1787 / 2291 / W)).